The primary structure comprises 742 residues: MTRPASAKRRSLLGILAAGTICAAALPYAAVPARADGQGNTGEAIIHADDHPENWLSYGRTYSEQRYSPLDQINRSNVGDLKLLGYYTLDTNRGQEATPLVVDGIMYATTNWSKMEALDAATGKLLWQYDPKVPGNIADKGCCDTVNRGAGYWNGKVFWGTFDGRLVAADAKTGKKVWAVNTIPADASLGKQRSYTVDGAVRVAKGLVLIGNGGAEFGARGFVSAFDAETGKLKWRFYTVPNNKNEPDHAASDNILMNKAYKTWGPKGAWVRQGGGGTVWDSLVYDPVSDLIYLAVGNGSPWNYKYRSEGIGSNLFLGSIVALKPETGEYVWHFQATPMDQWDYTSVQQIMTLDMPVKGEMRHVIVHAPKNGFFYVLDAKTGEFLSGKNYVYQNWANGLDPLTGRPMYNPDGLYTLNGKFWYGIPGPLGAHNFMAMAYSPKTHLVYIPAHQIPFGYKNQVGGFKPHADSWNVGLDMTKNGLPDTPEARTAYIKDLHGWLLAWDPVKMETVWKIDHKGPWNGGILATGGDLLFQGLANGEFHAYDATNGSDLYKFDAQSGIIAPPMTYSVNGKQYVAVEVGWGGIYPISMGGVGRTSGWTVNHSYIAAFSLDGKAKLPALNNRGFLPVKPPAQYDQKVVDNGYFQYQTYCQTCHGDNGEGAGMLPDLRWAGAIRHQDAFYNVVGRGALTAYGMDRFDTSMTPDEIEAIRQYLIKRANDTYQREVDARKNDKNIPENPTLGINP.

The N-terminal stretch at 1–35 (MTRPASAKRRSLLGILAAGTICAAALPYAAVPARA) is a signal peptide. Glutamate 96 lines the pyrroloquinoline quinone pocket. Cysteine 142 and cysteine 143 are joined by a disulfide. Arginine 148 contacts pyrroloquinoline quinone. Residue glutamate 216 participates in Ca(2+) binding. Residue threonine 278 coordinates pyrroloquinoline quinone. 2 residues coordinate Ca(2+): asparagine 298 and aspartate 343. Aspartate 343 serves as the catalytic Proton acceptor. Residues lysine 370 and isoleucine 584 each contribute to the pyrroloquinoline quinone site. The Cytochrome c domain maps to 636–715 (KVVDNGYFQY…AIRQYLIKRA (80 aa)). 4 residues coordinate heme c: cysteine 649, cysteine 652, histidine 653, and methionine 692. Residues 722-732 (EVDARKNDKNI) are compositionally biased toward basic and acidic residues. The tract at residues 722–742 (EVDARKNDKNIPENPTLGINP) is disordered.

This sequence belongs to the bacterial PQQ dehydrogenase family. The alcohol dehydrogenase multicomponent enzyme system is composed of a dehydrogenase subunit I (AdhA) and a cytochrome c subunit II (AdhB). Pyrroloquinoline quinone serves as cofactor. Ca(2+) is required as a cofactor. The cofactor is heme c.

The protein resides in the cell membrane. It catalyses the reaction ethanol + a ubiquinone = a ubiquinol + acetaldehyde. Functionally, dehydrogenase component of the alcohol dehydrogenase multicomponent enzyme system which is involved in the production of acetic acid and in the ethanol oxidase respiratory chain. Quinohemoprotein alcohol dehydrogenase (ADH) catalyzes the oxidation of ethanol to acetaldehyde by transferring electrons to the ubiquinone embedded in the membrane phospholipids. The electrons transfer from ethanol to membranous ubiquinone occurs from pyrroloquinoline quinone (PQQ) to one heme c in subunit I (AdhA), and finally to two heme c in subunit II (AdhB). Besides ubiquinone reduction, ADH also has a ubiquinol (QH2) oxidation reaction which mediates electron transfer from ubiquinol to the non-energy generating bypass oxidase system. The electrons transfer occurs from ubiquinol (QH2) to the additional heme c within subunit II (AdhB). This Acetobacter aceti protein is Alcohol dehydrogenase (quinone), dehydrogenase subunit.